Here is a 141-residue protein sequence, read N- to C-terminus: Nucleoside diphosphate kinase (141 aa).

Residues Lys11, Phe59, Arg87, Thr93, Arg104, and Asn114 each contribute to the ATP site. His117 serves as the catalytic Pros-phosphohistidine intermediate.

It belongs to the NDK family. Homotetramer. It depends on Mg(2+) as a cofactor.

Its subcellular location is the cytoplasm. It carries out the reaction a 2'-deoxyribonucleoside 5'-diphosphate + ATP = a 2'-deoxyribonucleoside 5'-triphosphate + ADP. It catalyses the reaction a ribonucleoside 5'-diphosphate + ATP = a ribonucleoside 5'-triphosphate + ADP. In terms of biological role, major role in the synthesis of nucleoside triphosphates other than ATP. The ATP gamma phosphate is transferred to the NDP beta phosphate via a ping-pong mechanism, using a phosphorylated active-site intermediate. The sequence is that of Nucleoside diphosphate kinase from Herminiimonas arsenicoxydans.